The chain runs to 190 residues: Elongation factor P-like protein (190 aa).

This sequence belongs to the elongation factor P family.

This is Elongation factor P-like protein from Erwinia tasmaniensis (strain DSM 17950 / CFBP 7177 / CIP 109463 / NCPPB 4357 / Et1/99).